We begin with the raw amino-acid sequence, 232 residues long: 5'-methylthioadenosine/S-adenosylhomocysteine nucleosidase (232 aa).

Glu12 serves as the catalytic Proton acceptor. Substrate is bound by residues Gly78, Ile152, and 173-174 (ME). The active-site Proton donor is the Asp197.

This sequence belongs to the PNP/UDP phosphorylase family. MtnN subfamily. In terms of assembly, homodimer.

The catalysed reaction is S-adenosyl-L-homocysteine + H2O = S-(5-deoxy-D-ribos-5-yl)-L-homocysteine + adenine. It carries out the reaction S-methyl-5'-thioadenosine + H2O = 5-(methylsulfanyl)-D-ribose + adenine. The enzyme catalyses 5'-deoxyadenosine + H2O = 5-deoxy-D-ribose + adenine. The protein operates within amino-acid biosynthesis; L-methionine biosynthesis via salvage pathway; S-methyl-5-thio-alpha-D-ribose 1-phosphate from S-methyl-5'-thioadenosine (hydrolase route): step 1/2. Its function is as follows. Catalyzes the irreversible cleavage of the glycosidic bond in both 5'-methylthioadenosine (MTA) and S-adenosylhomocysteine (SAH/AdoHcy) to adenine and the corresponding thioribose, 5'-methylthioribose and S-ribosylhomocysteine, respectively. Also cleaves 5'-deoxyadenosine, a toxic by-product of radical S-adenosylmethionine (SAM) enzymes, into 5-deoxyribose and adenine. Thus, is required for in vivo function of the radical SAM enzymes biotin synthase and lipoic acid synthase, that are inhibited by 5'-deoxyadenosine accumulation. In Klebsiella pneumoniae subsp. pneumoniae (strain ATCC 700721 / MGH 78578), this protein is 5'-methylthioadenosine/S-adenosylhomocysteine nucleosidase.